An 813-amino-acid polypeptide reads, in one-letter code: Cadherin-22 (813 aa).

The N-terminal stretch at 1 to 33 is a signal peptide; sequence MRPRPAGALRAGAALSPVLLLLLLLQLLGHLWA. The Extracellular segment spans residues 34 to 621; the sequence is ASTPAPSSLS…AFVMAASLSP (588 aa). 5 Cadherin domains span residues 61–165, 166–274, 275–391, 392–495, and 496–613; these read WVWN…EPRF, LHGP…PPRF, PQKM…PPEF, RPPS…NPPE, and LATP…TTAF. Asparagine 159 is a glycosylation site (N-linked (GlcNAc...) asparagine). Residues asparagine 463 and asparagine 609 are each glycosylated (N-linked (GlcNAc...) asparagine). A helical membrane pass occupies residues 622 to 642; sequence GALIALLVCVLILVVLALLIL. The Cytoplasmic segment spans residues 643-813; it reads TLRRHHKSHL…HRGDDEAPAS (171 aa). Positions 696 to 726 are disordered; it reads GGDPGGGAASPPQAASSSERHSLPRGPSSPE.

Strongly expressed in the pituitary gland and the brain (in the inner granular and glomerular layers of the olfactory bulb, anterior olfactory nucleus, primary olfactory cortex, Purkinje cell layer of cerebellum, and pineal gland). Low expression in lung and heart. No expression in submandibular gland, thymus, liver, spleen, adrenal, and kidney.

It localises to the cell membrane. Cadherins are calcium-dependent cell adhesion proteins. They preferentially interact with themselves in a homophilic manner in connecting cells; cadherins may thus contribute to the sorting of heterogeneous cell types. PB-cadherins may have a role in the morphological organization of pituitary gland and brain tissues. This Rattus norvegicus (Rat) protein is Cadherin-22 (Cdh22).